A 43-amino-acid polypeptide reads, in one-letter code: Protein PsbN (43 aa).

A helical transmembrane segment spans residues 5–27 (ALVAISISRLLVSFTGYALYTAF).

Belongs to the PsbN family.

The protein localises to the plastid. It is found in the chloroplast thylakoid membrane. In terms of biological role, may play a role in photosystem I and II biogenesis. In Bowenia serrulata (Byfield fern), this protein is Protein PsbN.